A 115-amino-acid chain; its full sequence is Insulin (115 aa).

The N-terminal stretch at 1–22 (MAALWLQSVSLLVLMLVSWSGS) is a signal peptide. Intrachain disulfides connect C32-C101, C44-C114, and C100-C105. A propeptide spans 56-92 (DVDPLLGFLPAKSGGAAAGGENEVAEFAFKDQMEMMV) (c peptide).

This sequence belongs to the insulin family. Heterodimer of a B chain and an A chain linked by two disulfide bonds.

The protein resides in the secreted. In terms of biological role, insulin decreases blood glucose concentration. It increases cell permeability to monosaccharides, amino acids and fatty acids. It accelerates glycolysis, the pentose phosphate cycle, and glycogen synthesis in liver. The protein is Insulin (ins) of Verasper moseri (Barfin flounder).